The chain runs to 294 residues: G-protein coupled receptor homolog U51 (294 aa).

The Extracellular segment spans residues 1-14; that stretch reads MKNIDLTNWKLLAE. A helical membrane pass occupies residues 15–35; the sequence is IYEYLFFFSFFFLCLLVIIVV. At 36–47 the chain is on the cytoplasmic side; sequence KFNNSTVGREYT. A helical membrane pass occupies residues 48-68; the sequence is FSTFSGMLVYILLLPVKMGML. At 69 to 79 the chain is on the extracellular side; it reads TKMWDVSTDYC. The chain crosses the membrane as a helical span at residues 80-102; that stretch reads IILMFLSDFSFIFSSWALTLLAL. At 103–119 the chain is on the cytoplasmic side; it reads ERINNFSFSEIKVNETK. Residues 120–140 traverse the membrane as a helical segment; that stretch reads ILKQMSFPIIWVTSIFQAVQI. At 141–166 the chain is on the extracellular side; sequence SMKYKKSQMNLEDDYCLLAIERSAEE. The chain crosses the membrane as a helical span at residues 167–187; sequence AWILLMYTVVIPTFIVFFYVL. The Cytoplasmic segment spans residues 188–200; the sequence is NKRFLFLERDLNS. Residues 201–221 form a helical membrane-spanning segment; that stretch reads IVTHLSLFLFFGALCFFPASV. The Extracellular portion of the chain corresponds to 222–236; the sequence is LNEFNCNRLFYGLHE. The chain crosses the membrane as a helical span at residues 237–257; that stretch reads LLIVCLELKIFYVPTMTYIIS. Topologically, residues 258–294 are cytoplasmic; that stretch reads CENYRLAAKAFFCKCFKPCFLMPSLRKLQQPTKSTQF.

This sequence belongs to the G-protein coupled receptor 1 family.

The protein localises to the host cell membrane. This Human herpesvirus 7 (strain JI) (HHV-7) protein is G-protein coupled receptor homolog U51 (U51).